Reading from the N-terminus, the 428-residue chain is Adenylosuccinate synthetase (428 aa).

GTP is bound by residues 12 to 18 (GDEGKGK) and 40 to 42 (GHT). Asp13 acts as the Proton acceptor in catalysis. Residues Asp13 and Gly40 each coordinate Mg(2+). IMP-binding positions include 13-16 (DEGK), 38-41 (NAGH), Thr128, Arg142, Gln222, Thr237, and Arg301. His41 functions as the Proton donor in the catalytic mechanism. 297-303 (VNTGRAR) lines the substrate pocket. GTP is bound by residues Arg303, 329 to 331 (KLD), and 411 to 413 (STS).

The protein belongs to the adenylosuccinate synthetase family. Homodimer. Mg(2+) is required as a cofactor.

The protein resides in the cytoplasm. The enzyme catalyses IMP + L-aspartate + GTP = N(6)-(1,2-dicarboxyethyl)-AMP + GDP + phosphate + 2 H(+). The protein operates within purine metabolism; AMP biosynthesis via de novo pathway; AMP from IMP: step 1/2. Its function is as follows. Plays an important role in the de novo pathway of purine nucleotide biosynthesis. Catalyzes the first committed step in the biosynthesis of AMP from IMP. The chain is Adenylosuccinate synthetase from Caulobacter sp. (strain K31).